The following is a 600-amino-acid chain: Methionine--tRNA ligase (600 aa).

The 'HIGH' region signature appears at 12–22 (PYANGPRHIGH). Residues C144, C147, C157, and C160 each contribute to the Zn(2+) site. The 'KMSKS' region motif lies at 351–355 (KFSSS). S354 serves as a coordination point for ATP.

This sequence belongs to the class-I aminoacyl-tRNA synthetase family. MetG type 1 subfamily. Monomer. Zn(2+) serves as cofactor.

It is found in the cytoplasm. The enzyme catalyses tRNA(Met) + L-methionine + ATP = L-methionyl-tRNA(Met) + AMP + diphosphate. Is required not only for elongation of protein synthesis but also for the initiation of all mRNA translation through initiator tRNA(fMet) aminoacylation. The polypeptide is Methionine--tRNA ligase (Chloroflexus aggregans (strain MD-66 / DSM 9485)).